Consider the following 201-residue polypeptide: Small ribosomal subunit protein uS4 (201 aa).

An S4 RNA-binding domain is found at 92–155; sequence RRLDAVVYAL…QKLDIIQESV (64 aa).

Belongs to the universal ribosomal protein uS4 family. In terms of assembly, part of the 30S ribosomal subunit. Contacts protein S5. The interaction surface between S4 and S5 is involved in control of translational fidelity.

One of the primary rRNA binding proteins, it binds directly to 16S rRNA where it nucleates assembly of the body of the 30S subunit. Its function is as follows. With S5 and S12 plays an important role in translational accuracy. This chain is Small ribosomal subunit protein uS4, found in Staphylococcus carnosus (strain TM300).